Reading from the N-terminus, the 193-residue chain is Imidazoleglycerol-phosphate dehydratase (193 aa).

The protein belongs to the imidazoleglycerol-phosphate dehydratase family.

The protein localises to the cytoplasm. The enzyme catalyses D-erythro-1-(imidazol-4-yl)glycerol 3-phosphate = 3-(imidazol-4-yl)-2-oxopropyl phosphate + H2O. It participates in amino-acid biosynthesis; L-histidine biosynthesis; L-histidine from 5-phospho-alpha-D-ribose 1-diphosphate: step 6/9. This Staphylococcus carnosus (strain TM300) protein is Imidazoleglycerol-phosphate dehydratase.